A 519-amino-acid polypeptide reads, in one-letter code: Protein M35 (519 aa).

Residues 485 to 519 (PVRPIRGGGQRMANMRGARPYSTVQRGRRRHESEV) are disordered. Positions 510–519 (RGRRRHESEV) are enriched in basic residues.

The protein resides in the host nucleus. Its function is as follows. Plays a role in the inhibition of host type I interferon production within the host nucleus. Targets specifically the NF-kappa-B-mediated interferon-beta transcription. This is Protein M35 (M35) from Mus musculus (Mouse).